Here is a 230-residue protein sequence, read N- to C-terminus: Ribose-5-phosphate isomerase A (230 aa).

Substrate contacts are provided by residues 31 to 34 (TGST), 87 to 90 (DGAD), and 100 to 103 (KGGG). Glu109 (proton acceptor) is an active-site residue. Lys127 lines the substrate pocket.

It belongs to the ribose 5-phosphate isomerase family. Homodimer.

It catalyses the reaction aldehydo-D-ribose 5-phosphate = D-ribulose 5-phosphate. Its pathway is carbohydrate degradation; pentose phosphate pathway; D-ribose 5-phosphate from D-ribulose 5-phosphate (non-oxidative stage): step 1/1. Functionally, catalyzes the reversible conversion of ribose-5-phosphate to ribulose 5-phosphate. In Lactobacillus delbrueckii subsp. bulgaricus (strain ATCC 11842 / DSM 20081 / BCRC 10696 / JCM 1002 / NBRC 13953 / NCIMB 11778 / NCTC 12712 / WDCM 00102 / Lb 14), this protein is Ribose-5-phosphate isomerase A.